The following is a 402-amino-acid chain: Multidrug resistance protein MdtH (402 aa).

At 1 to 12 (MSRVSQARNLGK) the chain is on the cytoplasmic side. A helical transmembrane segment spans residues 13–33 (YFLLIDNMLVVLGFFVVFPLI). Residues 34–98 (SIRFIDQMGW…GFATMGIAHE (65 aa)) lie on the Periplasmic side of the membrane. A helical transmembrane segment spans residues 99-116 (PWLLWFSCFLSGLGGTLF). Residues 117–138 (DPPRSALVVKLIRPEQRGRFFS) are Cytoplasmic-facing. The helical transmembrane segment at 139 to 159 (LLMMQDSAGAVIGALLGSWLL) threads the bilayer. At 160–164 (QYDFR) the chain is on the periplasmic side. Residues 165-185 (LVCATGAILFILCALFNAWLL) form a helical membrane-spanning segment. At 186 to 213 (PAWKLSTVRTPVREGMRRVMSDKRFVTY) the chain is on the cytoplasmic side. Residues 214–234 (VLTLAGYYMLAVQVMLMLPIM) traverse the membrane as a helical segment. The Periplasmic segment spans residues 235–243 (VNDIAGSPA). A helical transmembrane segment spans residues 244–264 (AVKWMYAIEACLSLTLLYPIA). Over 265-276 (RWSEKRFRLEHR) the chain is Cytoplasmic. The chain crosses the membrane as a helical span at residues 277-297 (LMAGLLVMSLSMIPIGMVGNL). Residues 298-299 (QQ) are Periplasmic-facing. The chain crosses the membrane as a helical span at residues 300–320 (LFTLICAFYIGSVIAEPARET). The Cytoplasmic portion of the chain corresponds to 321–339 (LSASLADARARGSYMGFSR). Residues 340–360 (LGLAIGGAIGYIGGGWLFDMG) traverse the membrane as a helical segment. Residues 361-367 (KALTQPE) are Periplasmic-facing. The chain crosses the membrane as a helical span at residues 368–388 (LPWMMLGIIGFITFLALGWQF). The Cytoplasmic segment spans residues 389–402 (SHKRTPRRMLEPGA).

This sequence belongs to the major facilitator superfamily. DHA1 family. MdtH (TC 2.A.1.2.21) subfamily.

It is found in the cell inner membrane. In Salmonella paratyphi C (strain RKS4594), this protein is Multidrug resistance protein MdtH.